A 284-amino-acid chain; its full sequence is Formyltetrahydrofolate deformylase (284 aa).

The ACT domain occupies 7-90 (TLLVSCPDQP…QIHFSDQLPR (84 aa)). The active site involves aspartate 228.

It belongs to the PurU family.

It carries out the reaction (6R)-10-formyltetrahydrofolate + H2O = (6S)-5,6,7,8-tetrahydrofolate + formate + H(+). It participates in purine metabolism; IMP biosynthesis via de novo pathway; formate from 10-formyl-5,6,7,8-tetrahydrofolate: step 1/1. Functionally, catalyzes the hydrolysis of 10-formyltetrahydrofolate (formyl-FH4) to formate and tetrahydrofolate (FH4). The chain is Formyltetrahydrofolate deformylase from Synechocystis sp. (strain ATCC 27184 / PCC 6803 / Kazusa).